The sequence spans 222 residues: Adenylate kinase (222 aa).

An ATP-binding site is contributed by 10 to 15; it reads GAGKGT. Positions 30–59 are NMP; the sequence is STGDMLRAAVKAGTPLGIEAKKVMDAGGLV. AMP-binding positions include threonine 31, arginine 36, 57-59, 85-88, and glutamine 92; these read GLV and GFPR. Positions 122 to 159 are LID; the sequence is GRRVHVASGRTYHVKYNPPKTEGVDDESGEPLIQRDDD. Residues arginine 123 and 132 to 133 contribute to the ATP site; that span reads TY. The disordered stretch occupies residues 138 to 160; sequence NPPKTEGVDDESGEPLIQRDDDK. AMP contacts are provided by arginine 156 and arginine 167. Glycine 207 serves as a coordination point for ATP.

Belongs to the adenylate kinase family. Monomer.

The protein resides in the cytoplasm. The catalysed reaction is AMP + ATP = 2 ADP. It participates in purine metabolism; AMP biosynthesis via salvage pathway; AMP from ADP: step 1/1. In terms of biological role, catalyzes the reversible transfer of the terminal phosphate group between ATP and AMP. Plays an important role in cellular energy homeostasis and in adenine nucleotide metabolism. This Ralstonia pickettii (strain 12J) protein is Adenylate kinase.